A 503-amino-acid polypeptide reads, in one-letter code: Probable cytosol aminopeptidase (503 aa).

Residues K270 and D275 each contribute to the Mn(2+) site. Residue K282 is part of the active site. Residues D293, D352, and E354 each coordinate Mn(2+). Residue R356 is part of the active site.

Belongs to the peptidase M17 family. It depends on Mn(2+) as a cofactor.

Its subcellular location is the cytoplasm. It catalyses the reaction Release of an N-terminal amino acid, Xaa-|-Yaa-, in which Xaa is preferably Leu, but may be other amino acids including Pro although not Arg or Lys, and Yaa may be Pro. Amino acid amides and methyl esters are also readily hydrolyzed, but rates on arylamides are exceedingly low.. The enzyme catalyses Release of an N-terminal amino acid, preferentially leucine, but not glutamic or aspartic acids.. Presumably involved in the processing and regular turnover of intracellular proteins. Catalyzes the removal of unsubstituted N-terminal amino acids from various peptides. In Klebsiella pneumoniae subsp. pneumoniae (strain ATCC 700721 / MGH 78578), this protein is Probable cytosol aminopeptidase.